We begin with the raw amino-acid sequence, 444 residues long: MIKMIKNVAIIYPNKFKAGISCLAVHVLANHLSKYRDLNVGVYFLENYDRIKNFDAIFITLQYENDYFNAIKIIKDLRKNNPNAIFVAGGPCVMENFFPIAEFFDVFIVGEIEGSDVMLKVINREFDVEGVYSKYLEKDKVKRIYPKKLTIDDYPIYQPTSEEGAYGKSFLLEIGRGCPRRCRFCLARAIYYPPRFRKLDDLMYLAEEGVKVNKVNKVALIAPSVGDYKYIVELCNFLDDMGVHISPSSLRADTLNDDLMRILKPKTLTIAPEAGSERLREFIKKDIRERDIANAIDLAKKFGVEKVKLYFMVGIPTETDEDIEELINLTKKVKKEIRKVEISVNPMIPKPHTDFEVEEFDLSSKKKIKYIEKALKKEGIRVEYENFNSMICQCILARGDENLSKYLDYSKNPTSLISALKKDRLLDKYLGRFEDKGVWKNIIL.

Residues 164-381 form the Radical SAM core domain; that stretch reads GAYGKSFLLE…EKALKKEGIR (218 aa). The [4Fe-4S] cluster site is built by Cys178, Cys182, and Cys185.

The cofactor is [4Fe-4S] cluster.

This is an uncharacterized protein from Methanocaldococcus jannaschii (strain ATCC 43067 / DSM 2661 / JAL-1 / JCM 10045 / NBRC 100440) (Methanococcus jannaschii).